The sequence spans 156 residues: MKLFILAVGHKMPGWIASGFDEYTKRMPPELRIELREIKPELRSGGRSAESVMAAERQKIEAALPKGARLVALDERGRDWTTMQLAQALPGWQQDGRDVAFVIGGADGLDPDLKARADVLLRISSMTLPHGMVRVLLAEQLYRAWSITQNHPYHRA.

S-adenosyl-L-methionine contacts are provided by residues L73, G104, and I123–L128.

Belongs to the RNA methyltransferase RlmH family. Homodimer.

Its subcellular location is the cytoplasm. It catalyses the reaction pseudouridine(1915) in 23S rRNA + S-adenosyl-L-methionine = N(3)-methylpseudouridine(1915) in 23S rRNA + S-adenosyl-L-homocysteine + H(+). Its function is as follows. Specifically methylates the pseudouridine at position 1915 (m3Psi1915) in 23S rRNA. The protein is Ribosomal RNA large subunit methyltransferase H of Burkholderia cenocepacia (strain HI2424).